The primary structure comprises 210 residues: Na(+)-translocating NADH-quinone reductase subunit D (210 aa).

A run of 6 helical transmembrane segments spans residues 14–34 (PIIN…ALAV), 42–62 (LVMS…ISLI), 72–92 (IIVQ…VLQA), 96–116 (EIAK…IVMG), 131–151 (FMDG…VGFF), and 178–198 (NGLL…IWVI).

The protein belongs to the NqrDE/RnfAE family. Composed of six subunits; NqrA, NqrB, NqrC, NqrD, NqrE and NqrF.

It is found in the cell inner membrane. The enzyme catalyses a ubiquinone + n Na(+)(in) + NADH + H(+) = a ubiquinol + n Na(+)(out) + NAD(+). Its function is as follows. NQR complex catalyzes the reduction of ubiquinone-1 to ubiquinol by two successive reactions, coupled with the transport of Na(+) ions from the cytoplasm to the periplasm. NqrA to NqrE are probably involved in the second step, the conversion of ubisemiquinone to ubiquinol. The polypeptide is Na(+)-translocating NADH-quinone reductase subunit D (Shewanella denitrificans (strain OS217 / ATCC BAA-1090 / DSM 15013)).